Here is a 598-residue protein sequence, read N- to C-terminus: DNA polymerase alpha subunit B (598 aa).

Polar residues predominate over residues serine 112–arginine 140. Positions serine 112–arginine 167 are disordered. At serine 126 the chain carries Phosphoserine. Phosphothreonine occurs at positions 127 and 130. 4 positions are modified to phosphoserine: serine 141, serine 147, serine 152, and serine 154. Positions serine 141–serine 158 are enriched in low complexity.

It belongs to the DNA polymerase alpha subunit B family. Component of the alpha DNA polymerase complex (also known as the alpha DNA polymerase-primase complex) consisting of four subunits: the catalytic subunit POLA1, the regulatory subunit POLA2, and primase complex subunits PRIM1 and PRIM2 respectively. Within the complex, POLA1 directly interacts with PRIM2/p58. In terms of processing, phosphorylated in a cell cycle-dependent manner, in G2/M phase.

Its subcellular location is the nucleus. In terms of biological role, accessory subunit of the DNA polymerase alpha complex (also known as the alpha DNA polymerase-primase complex) which plays an essential role in the initiation of DNA synthesis. During the S phase of the cell cycle, the DNA polymerase alpha complex (composed of a catalytic subunit POLA1, an accessory subunit POLA2 and two primase subunits, the catalytic subunit PRIM1 and the regulatory subunit PRIM2) is recruited to DNA at the replicative forks via direct interactions with MCM10 and WDHD1. The primase subunit of the polymerase alpha complex initiates DNA synthesis by oligomerising short RNA primers on both leading and lagging strands. These primers are initially extended by the polymerase alpha catalytic subunit and subsequently transferred to polymerase delta and polymerase epsilon for processive synthesis on the lagging and leading strand, respectively. The sequence is that of DNA polymerase alpha subunit B (POLA2) from Homo sapiens (Human).